Consider the following 159-residue polypeptide: Ribonuclease P protein component 2 (159 aa).

The protein belongs to the eukaryotic/archaeal RNase P protein component 2 family. As to quaternary structure, consists of a catalytic RNA component and at least 4-5 protein subunits.

It is found in the cytoplasm. It catalyses the reaction Endonucleolytic cleavage of RNA, removing 5'-extranucleotides from tRNA precursor.. Its function is as follows. Part of ribonuclease P, a protein complex that generates mature tRNA molecules by cleaving their 5'-ends. This is Ribonuclease P protein component 2 from Halorubrum lacusprofundi (strain ATCC 49239 / DSM 5036 / JCM 8891 / ACAM 34).